Reading from the N-terminus, the 304-residue chain is N-acetylmuramic acid 6-phosphate etherase (304 aa).

The 164-residue stretch at 62 to 225 folds into the SIS domain; sequence IVTAFRQGGR…TTASMILMGK (164 aa). Glutamate 90 acts as the Proton donor in catalysis. Residue glutamate 121 is part of the active site.

Belongs to the GCKR-like family. MurNAc-6-P etherase subfamily. In terms of assembly, homodimer.

It catalyses the reaction N-acetyl-D-muramate 6-phosphate + H2O = N-acetyl-D-glucosamine 6-phosphate + (R)-lactate. Its pathway is amino-sugar metabolism; 1,6-anhydro-N-acetylmuramate degradation. The protein operates within amino-sugar metabolism; N-acetylmuramate degradation. It functions in the pathway cell wall biogenesis; peptidoglycan recycling. Its function is as follows. Specifically catalyzes the cleavage of the D-lactyl ether substituent of MurNAc 6-phosphate, producing GlcNAc 6-phosphate and D-lactate. Together with AnmK, is also required for the utilization of anhydro-N-acetylmuramic acid (anhMurNAc) either imported from the medium or derived from its own cell wall murein, and thus plays a role in cell wall recycling. The protein is N-acetylmuramic acid 6-phosphate etherase of Actinobacillus succinogenes (strain ATCC 55618 / DSM 22257 / CCUG 43843 / 130Z).